A 437-amino-acid chain; its full sequence is Phosphomethylpyrimidine synthase (437 aa).

Residues asparagine 69, methionine 98, tyrosine 127, histidine 163, 185–187, 226–229, and glutamate 265 each bind substrate; these read SRG and DACR. Position 269 (histidine 269) interacts with Zn(2+). Tyrosine 292 serves as a coordination point for substrate. Residue histidine 333 participates in Zn(2+) binding. [4Fe-4S] cluster contacts are provided by cysteine 409, cysteine 412, and cysteine 416.

Belongs to the ThiC family. [4Fe-4S] cluster is required as a cofactor.

The enzyme catalyses 5-amino-1-(5-phospho-beta-D-ribosyl)imidazole + S-adenosyl-L-methionine = 4-amino-2-methyl-5-(phosphooxymethyl)pyrimidine + CO + 5'-deoxyadenosine + formate + L-methionine + 3 H(+). The protein operates within cofactor biosynthesis; thiamine diphosphate biosynthesis. Catalyzes the synthesis of the hydroxymethylpyrimidine phosphate (HMP-P) moiety of thiamine from aminoimidazole ribotide (AIR) in a radical S-adenosyl-L-methionine (SAM)-dependent reaction. This is Phosphomethylpyrimidine synthase from Clostridium botulinum (strain Loch Maree / Type A3).